The chain runs to 570 residues: Protein NRT1/ PTR FAMILY 8.2 (570 aa).

Thr-99 bears the Phosphothreonine mark. 10 consecutive transmembrane segments (helical) span residues 100–120 (IASF…SASV), 136–156 (AGQT…TGGI), 182–202 (FFNW…SVLV), 210–230 (WGWG…FFFA), 335–355 (IWAT…VFVL), 370–390 (IPSA…APVY), 414–434 (IGIG…LEVA), 454–474 (IFWQ…TFIG), 493–513 (ALSL…VTLV), and 537–557 (YFFW…LWIA).

This sequence belongs to the major facilitator superfamily. Proton-dependent oligopeptide transporter (POT/PTR) (TC 2.A.17) family. Expressed in developing and germinating pollen grains and ovules.

The protein resides in the cell membrane. In terms of biological role, peptide transporter. Mediates the transport of di- and tripeptides. High affinity transporter. Involved in the uptake of peptides during pollen germination and tube growth. This chain is Protein NRT1/ PTR FAMILY 8.2 (NPF8.2), found in Arabidopsis thaliana (Mouse-ear cress).